The sequence spans 493 residues: Probable fatty acyl-CoA reductase 4 (493 aa).

It belongs to the fatty acyl-CoA reductase family. As to expression, expressed in the endodermal cell layer surrounding the central vasculature in roots. Expressed in the hilum region of seeds. Expressed in stamen filaments and receptacle of siliques.

It catalyses the reaction a long-chain fatty acyl-CoA + 2 NADPH + 2 H(+) = a long-chain primary fatty alcohol + 2 NADP(+) + CoA. In terms of biological role, catalyzes the reduction of fatty acyl-CoA to fatty alcohols. Catalyzes specifically the formation of C18:0 and C20:0 fatty alcohols. Provides the fatty alcohols required for synthesis of suberin in roots, seed coat and wound-induced leaf tissue. Provides the fatty alcohols required for synthesis of alkyl hydroxycinnamates in root waxes. The sequence is that of Probable fatty acyl-CoA reductase 4 from Arabidopsis thaliana (Mouse-ear cress).